Here is a 349-residue protein sequence, read N- to C-terminus: Outer membrane protein assembly factor BamC (349 aa).

Residues 1–24 form the signal peptide; that stretch reads MAILLQKSKVMKIAGMSLAMLLAA. Cys-25 carries the N-palmitoyl cysteine lipid modification. The S-diacylglycerol cysteine moiety is linked to residue Cys-25.

It belongs to the BamC family. Part of the Bam complex, which is composed of the outer membrane protein BamA, and four lipoproteins BamB, BamC, BamD and BamE.

The protein localises to the cell outer membrane. Its function is as follows. Part of the outer membrane protein assembly complex, which is involved in assembly and insertion of beta-barrel proteins into the outer membrane. The chain is Outer membrane protein assembly factor BamC from Photorhabdus asymbiotica subsp. asymbiotica (strain ATCC 43949 / 3105-77) (Xenorhabdus luminescens (strain 2)).